The chain runs to 756 residues: Xylosyl- and glucuronyltransferase LARGE1 (756 aa).

The Cytoplasmic segment spans residues 1 to 10; sequence MLGICRGRRK. The helical; Signal-anchor for type II membrane protein transmembrane segment at 11–31 threads the bilayer; it reads FLAASLSLLCIPAITWIYLFS. Topologically, residues 32 to 756 are lumenal; that stretch reads GSFEDGKPVS…LKYLTAENNS (725 aa). Disordered regions lie at residues 43–69 and 81–109; these read SPLE…EVRM and RQLS…EGTG. The span at 44–58 shows a compositional bias: polar residues; sequence PLESQAHSPRYTASS. Residues 53–95 adopt a coiled-coil conformation; it reads RYTASSQRERESLEVRMREVEEENRALRRQLSLAQGRAPSHRR. The span at 59 to 69 shows a compositional bias: basic and acidic residues; that stretch reads QRERESLEVRM. N-linked (GlcNAc...) asparagine glycosylation is found at N97, N122, and N148. The tract at residues 138 to 413 is xylosyltransferase activity; sequence IHVAIVCAGY…FLEYDGNLLR (276 aa). 2 residues coordinate Mn(2+): D242 and D244. N-linked (GlcNAc...) asparagine glycosylation occurs at N272. A glucuronyltransferase activity region spans residues 414–756; that stretch reads RELFGCPSEA…LKYLTAENNS (343 aa). The Mn(2+) site is built by D563 and D565.

It in the C-terminal section; belongs to the glycosyltransferase 49 family. In the N-terminal section; belongs to the glycosyltransferase 8 family. Interacts with DAG1 (via the N-terminal domain of alpha-DAG1); the interaction increases binding of DAG1 to laminin. Interacts with B4GAT1. It depends on Mn(2+) as a cofactor. In terms of tissue distribution, ubiquitous. Highest expression in heart, brain and skeletal muscle.

It localises to the golgi apparatus membrane. The catalysed reaction is 3-O-[beta-D-GlcA-(1-&gt;3)-beta-D-Xyl-(1-&gt;4)-Rib-ol-P-Rib-ol-P-3-beta-D-GalNAc-(1-&gt;3)-beta-D-GlcNAc-(1-&gt;4)-(O-6-P-alpha-D-Man)]-Thr-[protein] + UDP-alpha-D-xylose = 3-O-[alpha-D-Xyl-(1-&gt;3)-beta-D-GlcA-(1-&gt;4)-beta-D-Xyl-(1-&gt;4)-Rib-ol-P-Rib-ol-P-3-beta-D-GalNAc-(1-&gt;3)-beta-D-GlcNAc-(1-&gt;4)-(O-6-P-alpha-D-Man)]-Thr-[protein] + UDP + H(+). It carries out the reaction 3-O-{(1-&gt;[3)-alpha-D-Xyl-(1-&gt;3)-beta-D-GlcA-(1-&gt;](n)-4)-beta-D-Xyl-(1-&gt;4)-Rib-ol-P-Rib-ol-P-3-beta-D-GalNAc-(1-&gt;3)-beta-D-GlcNAc-(1-&gt;4)-O-6-P-alpha-D-Man}-L-Thr-[protein] + UDP-alpha-D-glucuronate = 3-O-{beta-D-GlcA-(1-&gt;[3)-alpha-D-Xyl-(1-&gt;3)-beta-D-GlcA-(1-&gt;](n)-4)-beta-D-Xyl-(1-&gt;4)-Rib-ol-P-Rib-ol-P-3-beta-D-GalNAc-(1-&gt;3)-beta-D-GlcNAc-(1-&gt;4)-O-6-P-alpha-D-Man}-L-Thr-[protein] + UDP + H(+). It catalyses the reaction 3-O-{beta-D-GlcA-(1-&gt;[3)-alpha-D-Xyl-(1-&gt;3)-beta-D-GlcA-(1-&gt;](n)-4)-beta-D-Xyl-(1-&gt;4)-Rib-ol-P-Rib-ol-P-3-beta-D-GalNAc-(1-&gt;3)-beta-D-GlcNAc-(1-&gt;4)-O-6-P-alpha-D-Man}-L-Thr-[protein] + UDP-alpha-D-xylose = 3-O-{(1-&gt;[3)-alpha-D-Xyl-(1-&gt;3)-beta-D-GlcA-(1-&gt;](n+1)-4)-beta-D-Xyl-(1-&gt;4)-Rib-ol-P-Rib-ol-P-3-beta-D-GalNAc-(1-&gt;3)-beta-D-GlcNAc-(1-&gt;4)-O-6-P-alpha-D-Man}-L-Thr-[protein] + UDP + H(+). The protein operates within protein modification; protein glycosylation. Functionally, bifunctional glycosyltransferase with both alpha-1,3-xylosyltransferase and beta-1,3-glucuronyltransferase activities involved in the maturation of alpha-dystroglycan (DAG1) by glycosylation leading to DAG1 binding to laminin G-like domain-containing extracellular proteins with high affinity. Elongates the glucuronyl-beta-1,4-xylose-beta disaccharide primer structure initiated by B4GAT1 by adding repeating units [-3-Xylose-alpha-1,3-GlcA-beta-1-] to produce a heteropolysaccharide. Requires the phosphorylation of core M3 (O-mannosyl trisaccharide) by POMK to elongate the glucuronyl-beta-1,4-xylose-beta disaccharide primer. Plays a key role in skeletal muscle function and regeneration. In Homo sapiens (Human), this protein is Xylosyl- and glucuronyltransferase LARGE1.